We begin with the raw amino-acid sequence, 94 residues long: Small ribosomal subunit protein bS20 (94 aa).

This sequence belongs to the bacterial ribosomal protein bS20 family.

Its function is as follows. Binds directly to 16S ribosomal RNA. The sequence is that of Small ribosomal subunit protein bS20 from Symbiobacterium thermophilum (strain DSM 24528 / JCM 14929 / IAM 14863 / T).